A 1149-amino-acid polypeptide reads, in one-letter code: MHVMNCVSLASDKENGTLATAAAFMTGQTSPSASPPPPPPPPPPPPCPHSGEGFSPSPPPPLPPPLPGGPPIPPPPPPGLPSVSYLNGYSSLGKKKRMRSFFWKTIPEEQVRGKTNIWTLAAKQQHQYQIDKKTIEELFGQQEDTSKASLPKRGGALNSSFRDAREEVTVLDAKRSMNIGIFLKQFKKSPQSIVEDIYQGKSEHYGSETLREILKLLPESEEVKKLKAFNGDVSKLSLADSFLHCLIQVPNYSLRIEAMVLKKEFLPSCSSLFKDIRTLRAATKELMLCEELHSILHLVLQAGNIMNAGGYAGNAVGFKLSSLLKLADTKANKPGMNLLHFVAQEAQKQDAILLNFSEKLQHVQETSRLSLDITEAELHSLFVRTKSLQENIQLDQELCQQMEDFLQFAVEKLAELELWKRELQGEAHTLIDFFCEDKETMKLDECFQIFRDFCTRFNKAVKDNHDREEQERKQLQRQKEMEQKRYSWSTGELGSFGRSSSENDVQMLAKTGTEDLPSFLKPRPNSPSYRPPNTRRSRLSLGISADRELLTFLESATSSPEDPNKFNSLPRSSPRQARPTIAWMEPREQQSHGPNFTHEPQASKIQEKAPPPAWQNQLPTTWREEPASPLPLAGRSRPSLRKRNSEPVGLGPTQSPPLLPLDLGVREHELVTGLTQFDLQSPKSLEEGSQLTLNDFCPTKLPSPGDRSSQPFAAGGDSLPPKDTDTQEVLSPAGEDDRTISDEPSSEALVSVVVTDTEDKDAGPLLYVSDTTDCSLTLDCSEGMDSRAGGDKQEEEKEGDGSVSSGAGEAGSSQVSSNSVSSPPGEVPAPKSSKSELSCQGGLPKDRPSRGKDAIAPKRNSFKEASVGASKPVSARRSQGVTTKPVRTLNSSENEHMRKVVPISKSSRGAGPWKRPEPTPKATPRETPSSTDTPLSRRSSVRGTSDTSPRRPQVSGSGAEEPRLPRSSGSISGRPGKDAPLQPRASFRKPSAKPLRNIPRQKPEENKVSSPNSPDPESPKEEPKAPQATGVSRALPPIPSFARNTVASSSRSLRTDAPPAARTTGLTRTVSQRQLRVKGGSEDSASKDIGTLKRASSARASKKCPESAGGSSANVETSLKGRGTTERSSLRLKDSGQATLGRILRPLQK.

4 disordered regions span residues 18–79 (LATA…PPPG), 464–540 (NHDR…SRLS), 554–660 (ESAT…PLLP), and 681–1149 (SPKS…PLQK). Composition is skewed to pro residues over residues 33-48 (ASPPPPPPPPPPPPCP) and 56-79 (PSPPPPLPPPLPGGPPIPPPPPPG). One can recognise an FH2 domain in the interval 88–483 (GYSSLGKKKR…QLQRQKEMEQ (396 aa)). The segment covering 464–485 (NHDREEQERKQLQRQKEMEQKR) has biased composition (basic and acidic residues). Polar residues predominate over residues 486 to 504 (YSWSTGELGSFGRSSSEND). Ser-501 carries the phosphoserine modification. Positions 522 to 532 (PRPNSPSYRPP) are enriched in low complexity. Composition is skewed to polar residues over residues 554-575 (ESATSSPEDPNKFNSLPRSSPR) and 591-604 (SHGPNFTHEPQASK). 2 positions are modified to phosphoserine: Ser-645 and Ser-655. Positions 681-693 (SPKSLEEGSQLTL) are enriched in polar residues. Over residues 784-795 (MDSRAGGDKQEE) the composition is skewed to basic and acidic residues. Residues 801–822 (GSVSSGAGEAGSSQVSSNSVSS) are compositionally biased toward low complexity. Basic and acidic residues predominate over residues 844 to 856 (PKDRPSRGKDAIA). A compositionally biased stretch (polar residues) spans 926 to 947 (ETPSSTDTPLSRRSSVRGTSDT). The tract at residues 960 to 1086 (EEPRLPRSSG…VKGGSEDSAS (127 aa)) is MTBD; microtubule-binding domain. The segment covering 965–974 (PRSSGSISGR) has biased composition (low complexity). 2 stretches are compositionally biased toward polar residues: residues 1042-1052 (ARNTVASSSRS) and 1064-1074 (TGLTRTVSQRQ). The segment covering 1123 to 1134 (GTTERSSLRLKD) has biased composition (basic and acidic residues).

Interacts with CEP170. Brain, heart and lung (at protein level).

Its subcellular location is the golgi apparatus. It is found in the cell projection. The protein localises to the cilium. Microtubule-associated formin which regulates both actin and microtubule dynamics. Induces microtubule acetylation and stabilization and actin stress fiber formation. Regulates Golgi ribbon formation. Required for normal cilia assembly. Early in cilia assembly, may assist in the maturation and positioning of the centrosome/basal body, and once cilia assembly has initiated, may also promote cilia elongation by inhibiting disassembly. The protein is FH2 domain-containing protein 1 (Fhdc1) of Mus musculus (Mouse).